Reading from the N-terminus, the 167-residue chain is Lipoprotein signal peptidase (167 aa).

The next 3 membrane-spanning stretches (helical) occupy residues 7 to 27 (LFLLLGLTLTAGLDQAVKYWV), 61 to 81 (FSHWGIIAITIIVIIFLLWLW), and 87 to 107 (NKFLMRFGLVLIIGGAIGNLI). Residues D117 and D136 contribute to the active site. The chain crosses the membrane as a helical span at residues 126-146 (IFYFAIFNLADSFITLGVIVI).

It belongs to the peptidase A8 family.

The protein resides in the cell inner membrane. The catalysed reaction is Release of signal peptides from bacterial membrane prolipoproteins. Hydrolyzes -Xaa-Yaa-Zaa-|-(S,diacylglyceryl)Cys-, in which Xaa is hydrophobic (preferably Leu), and Yaa (Ala or Ser) and Zaa (Gly or Ala) have small, neutral side chains.. Its pathway is protein modification; lipoprotein biosynthesis (signal peptide cleavage). Functionally, this protein specifically catalyzes the removal of signal peptides from prolipoproteins. The protein is Lipoprotein signal peptidase of Bartonella tribocorum (strain CIP 105476 / IBS 506).